A 1364-amino-acid chain; its full sequence is MSHSVLVIGSGGREHAICWKLSQSTLVKQIYALPGSFGIQQVEKCRNLDAKVLDPKDFEAIAKWSKKNEISLVVVGPEDPLALGLGDVLQKEGIPCFGPGKQGAQIEADKKWAKDFMLRHGIPTARYESFTDTNKAKAFIRSAPYQALVVKAAGLAAGKGVVVAANVDEACQAVDEILGDLKYGQAGATLVVEELLEGEEISVLAFTDGKSVRAMLPAQDHKRLGNGDTGPNTGGMGAYCPCPLISQPALELVQRAVLERAVQGLIKERITYQGVLYAGLMLTRDGPRVLEFNCRFGDPETQVILPLLETDLFEVMQACCSGQLDRLPLQWRSGVSAVGVVLASAGYPETSTKGCLITGLPDVNSPTQLIFHSGLSVNKQKEALTNGGRVLIAIALDASLKEAAAKATKLAGTITFAGTGAQYRTDIAQKAFKIAIATAPGLSYKDSGVDIDAGDALVQRIKPLSRGTQRPGVLGGLGGFGGLFRLKDLSYKEPVIAEATQGVGAKIQLALQNELYENIGYDLFAMSANDLLELGAEPVAFLDYIACGKLHVPLAAQLVKGMADGCRDAKCALVGGETAEMPSLYAPGQHDMAGYCVGIVEQARVLPRFDLYEPEDLLVGLPSSGLHCAGFNEILTQLAASKVNLKECSPVGGGKHGLSLAQVLGTPTRLYVQQLLPHLQAGNQIKAVAHVTHGLLHDVQRLLPEGFEVTLDFGAVPVPDVFGWLAGQLQLSAQTLLERHNCGIGMVLVLPQSSLLWRTALPGAKVLGVLNRQAKASGGAPRVKVRNFVEQLQKLAAPFGGLGETQLPEEVKDVPSSGVKATTREECFENAVGRRLTRVPNHYVDPILILGTDGVGTKLKIAQQTHRNASVGIDLVAMCVNDILCNGAEPFSFSSYYACGKWQAALAAEVNAGVQEGASQANSSFVASHSAALPLLYEPQVYDLAGFALGIAERSGILPRLDEIQPGDVLIGLPSSGVHSNGFSLVHAVLKRAGLGLNDRAPFSEKTLGEELLVPTKIYVKALSALLSRPNHGIKALAHITGGGLSENIPRVLRKELAVRLDANKYPLPPVFAWLAAAGNISSTELQRTYNCGLGLVLVVGATEVDGVLRELRYPQRASVVGEVVARKDPKKPQVVVQNFEASLARTQRMLSQPRKRVAVLISGKGSNLQALIDAIRDSAQGVYAEIVLVISNKAGVLGLERAAKAGIPSMVISHKDFPSREVYDVELTRHLKTARVEFICLAGFMRILSVPFVREWRGRLINIHPSLLPKFPGLHVQKQALEAGETESGCTVHYVDEGVDTGAIIVQAAVPILPGDDEETLTQRIHYAEHWAFPRALALLASGALRRVSEVKKEAPKDIKDSQ.

An ATP-grasp domain is found at 114–321 (KDFMLRHGIP…LFEVMQACCS (208 aa)). 140–202 (IRSAPYQALV…EELLEGEEIS (63 aa)) serves as a coordination point for ATP. Positions 291 and 293 each coordinate Mn(2+). The AIRS stretch occupies residues 435 to 1154 (AIATAPGLSY…ARTQRMLSQP (720 aa)). Residues 1155–1364 (RKRVAVLISG…EAPKDIKDSQ (210 aa)) are GART. Residue 1166-1168 (GSN) coordinates N(1)-(5-phospho-beta-D-ribosyl)glycinamide. (6R)-10-formyltetrahydrofolate is bound by residues arginine 1221, 1246–1249 (MRIL), and asparagine 1263. Histidine 1265 functions as the Proton donor in the catalytic mechanism. 1297 to 1301 (DEGVD) provides a ligand contact to (6R)-10-formyltetrahydrofolate. N(1)-(5-phospho-beta-D-ribosyl)glycinamide is bound at residue 1327-1330 (HYAE).

It in the N-terminal section; belongs to the GARS family. In the central section; belongs to the AIR synthase family. The protein in the C-terminal section; belongs to the GART family.

The catalysed reaction is 5-phospho-beta-D-ribosylamine + glycine + ATP = N(1)-(5-phospho-beta-D-ribosyl)glycinamide + ADP + phosphate + H(+). The enzyme catalyses 2-formamido-N(1)-(5-O-phospho-beta-D-ribosyl)acetamidine + ATP = 5-amino-1-(5-phospho-beta-D-ribosyl)imidazole + ADP + phosphate + H(+). It catalyses the reaction N(1)-(5-phospho-beta-D-ribosyl)glycinamide + (6R)-10-formyltetrahydrofolate = N(2)-formyl-N(1)-(5-phospho-beta-D-ribosyl)glycinamide + (6S)-5,6,7,8-tetrahydrofolate + H(+). Its pathway is purine metabolism; IMP biosynthesis via de novo pathway; 5-amino-1-(5-phospho-D-ribosyl)imidazole from N(2)-formyl-N(1)-(5-phospho-D-ribosyl)glycinamide: step 2/2. It functions in the pathway purine metabolism; IMP biosynthesis via de novo pathway; N(1)-(5-phospho-D-ribosyl)glycinamide from 5-phospho-alpha-D-ribose 1-diphosphate: step 2/2. The protein operates within purine metabolism; IMP biosynthesis via de novo pathway; N(2)-formyl-N(1)-(5-phospho-D-ribosyl)glycinamide from N(1)-(5-phospho-D-ribosyl)glycinamide (10-formyl THF route): step 1/1. In terms of biological role, trifunctional enzyme required for de novo purine biosynthesis. The protein is Trifunctional purine biosynthetic protein adenosine-3 (ade3) of Drosophila pseudoobscura pseudoobscura (Fruit fly).